We begin with the raw amino-acid sequence, 334 residues long: Ornithine carbamoyltransferase subunit F (334 aa).

Carbamoyl phosphate contacts are provided by residues 56-59 (STRT), Q83, R107, and 134-137 (HPTQ). L-ornithine is bound by residues N168, D232, and 236 to 237 (SM). Residues 274 to 275 (CL) and R320 contribute to the carbamoyl phosphate site.

The protein belongs to the aspartate/ornithine carbamoyltransferase superfamily. OTCase family. In terms of assembly, in E.coli strain K12, trimer of identical or non-identical chains are composed of ArgI (I) and/or ArgF (F). The trimer has the following composition: FFI, FFF, FII, III. E.coli strains B and W, which are known to contain only ArgI, produce only a trimer of identical chains (III).

It localises to the cytoplasm. The catalysed reaction is carbamoyl phosphate + L-ornithine = L-citrulline + phosphate + H(+). It participates in amino-acid biosynthesis; L-arginine biosynthesis; L-arginine from L-ornithine and carbamoyl phosphate: step 1/3. Reversibly catalyzes the transfer of the carbamoyl group from carbamoyl phosphate (CP) to the N(epsilon) atom of ornithine (ORN) to produce L-citrulline, which is a substrate for argininosuccinate synthetase, the enzyme involved in the final step in arginine biosynthesis. In Escherichia coli (strain K12), this protein is Ornithine carbamoyltransferase subunit F.